We begin with the raw amino-acid sequence, 1195 residues long: Error-prone DNA polymerase (1195 aa).

The interval 1163-1195 (ALNGDRRDTPDAPAQRHRHPRDVRILPPSRDFH) is disordered.

This sequence belongs to the DNA polymerase type-C family. DnaE2 subfamily.

The protein localises to the cytoplasm. It catalyses the reaction DNA(n) + a 2'-deoxyribonucleoside 5'-triphosphate = DNA(n+1) + diphosphate. DNA polymerase involved in damage-induced mutagenesis and translesion synthesis (TLS). It is not the major replicative DNA polymerase. This Rhodopseudomonas palustris (strain ATCC BAA-98 / CGA009) protein is Error-prone DNA polymerase.